Consider the following 231-residue polypeptide: Small ribosomal subunit protein uS2c (231 aa).

The protein belongs to the universal ribosomal protein uS2 family.

It localises to the plastid. It is found in the chloroplast. In Gracilaria tenuistipitata var. liui (Red alga), this protein is Small ribosomal subunit protein uS2c (rps2).